The following is a 538-amino-acid chain: Chaperonin GroEL (538 aa).

Residues 29 to 32 (TIGP), 86 to 90 (DGTTT), glycine 413, 476 to 478 (NAA), and aspartate 492 each bind ATP.

This sequence belongs to the chaperonin (HSP60) family. In terms of assembly, forms a cylinder of 14 subunits composed of two heptameric rings stacked back-to-back. Interacts with the co-chaperonin GroES.

The protein resides in the cytoplasm. It carries out the reaction ATP + H2O + a folded polypeptide = ADP + phosphate + an unfolded polypeptide.. Functionally, together with its co-chaperonin GroES, plays an essential role in assisting protein folding. The GroEL-GroES system forms a nano-cage that allows encapsulation of the non-native substrate proteins and provides a physical environment optimized to promote and accelerate protein folding. The protein is Chaperonin GroEL of Staphylococcus aureus (strain Mu3 / ATCC 700698).